Consider the following 259-residue polypeptide: UPF0246 protein PSPA7_1607 (259 aa).

The protein belongs to the UPF0246 family.

The polypeptide is UPF0246 protein PSPA7_1607 (Pseudomonas paraeruginosa (strain DSM 24068 / PA7) (Pseudomonas aeruginosa (strain PA7))).